The primary structure comprises 654 residues: Collagen alpha-1(XXV) chain (654 aa).

Residues 1 to 26 (MLLKKHAGKGGGREPRSEDPTPAEQH) are disordered. At 1–33 (MLLKKHAGKGGGREPRSEDPTPAEQHCARTMPP) the chain is on the cytoplasmic side. Residues 34-54 (CAVLAALLSVVAVVSCLYLGV) traverse the membrane as a helical; Signal-anchor for type II membrane protein segment. Residues 55–654 (KTNDLQARIA…GLPMPGCWQK (600 aa)) are Extracellular-facing. E113 is modified (pyrrolidone carboxylic acid (Glu)). The disordered stretch occupies residues 116 to 168 (SECNCPAGPPGKRGKRGRRGESGPPGQPGPQGPPGPKGDKGEQGDQGPRMVFP). The 44-residue stretch at 121–164 (PAGPPGKRGKRGRRGESGPPGQPGPQGPPGPKGDKGEQGDQGPR) folds into the Collagen-like 1 domain. Residues 140 to 151 (PGQPGPQGPPGP) are compositionally biased toward pro residues. The segment at 181–188 (LIKRRLIK) is interaction with amyloid-beta peptide. 2 disordered regions span residues 189–426 (GDQG…QGAT) and 445–654 (LTVT…CWQK). 5 consecutive Collagen-like domains span residues 192–247 (GQAG…QKGS), 249–308 (GAPG…PGSS), 311–370 (GIKG…AGPP), 372–425 (RGER…DQGA), and 447–505 (VTGP…PGLP). A compositionally biased stretch (pro residues) spans 196–208 (PPGPPGPPGPRGP). Low complexity predominate over residues 230–245 (PGEQGLMGPLGPPGQK). A compositionally biased stretch (basic and acidic residues) spans 280-290 (EPGEQGEKGDA). Residues 336–358 (LPGIKGEPGFIGPQGEPGLPGLP) show a composition bias toward low complexity. Composition is skewed to basic and acidic residues over residues 361–377 (KGERGEAGPPGRGERGE) and 398–407 (SKGDRGEKGD). The segment covering 457–466 (QGLQGPKGEQ) has biased composition (low complexity). Residues 494 to 503 (GEKGGIGLPG) show a composition bias toward gly residues. Over residues 517–527 (SGMPGPQGPSI) the composition is skewed to low complexity. Residues 528 to 543 (IGPPGPPGPHGPPGPM) are compositionally biased toward pro residues. A Collagen-like 7 domain is found at 571 to 630 (GEKGAMGEPGPRGPYGLPGKDGEPGLDGFPGPRGEKGDLGEKGEKGFRGVKGEKGEPGQP). A compositionally biased stretch (basic and acidic residues) spans 603–626 (RGEKGDLGEKGEKGFRGVKGEKGE).

Forms homodimers and homotrimers. Binds to the fibrillized forms of amyloid-beta protein 40 (beta-APP40) and amyloid-beta protein 42 (beta-APP42). Found associated with beta-APP42 more frequently than with beta-APP40. Undergoes proteolytic cleavage by furin protease to yield the soluble collagen-like Alzheimer amyloid plaque component. In terms of processing, glycosylated. Post-translationally, hydroxylated on 11% of proline residues and 49% of lysine residues. Expressed predominantly in brain. Deposited preferentially in primitive or neuritic amyloid plaques which are typical of Alzheimer disease.

It localises to the membrane. Inhibits fibrillization of amyloid-beta peptide during the elongation phase. Has also been shown to assemble amyloid fibrils into protease-resistant aggregates. Binds heparin. The sequence is that of Collagen alpha-1(XXV) chain from Homo sapiens (Human).